The following is a 241-amino-acid chain: Dihydropteridine reductase (241 aa).

11–35 (LVYGGRGALGSRCVQAFRARNWWVA) serves as a coordination point for NADP(+). An N6-succinyllysine mark is found at lysine 70, lysine 76, lysine 93, and lysine 99. Tyrosine 147 functions as the Proton acceptor in the catalytic mechanism. Serine 170 carries the post-translational modification Phosphoserine.

Belongs to the short-chain dehydrogenases/reductases (SDR) family. Homodimer.

It catalyses the reaction 5,6,7,8-tetrahydropteridine + NAD(+) = 6,7-dihydropteridine + NADH + H(+). The catalysed reaction is 5,6,7,8-tetrahydropteridine + NADP(+) = 6,7-dihydropteridine + NADPH + H(+). In terms of biological role, catalyzes the conversion of quinonoid dihydrobiopterin into tetrahydrobiopterin. In Rattus norvegicus (Rat), this protein is Dihydropteridine reductase (Qdpr).